We begin with the raw amino-acid sequence, 209 residues long: DNA transformation protein TfoX1 (209 aa).

This sequence belongs to the Sxy/TfoX family.

In terms of biological role, required for DNA transformation jointly with TfoY (tfoX2). The sequence is that of DNA transformation protein TfoX1 from Aliivibrio fischeri (strain ATCC 700601 / ES114) (Vibrio fischeri).